Reading from the N-terminus, the 223-residue chain is Glutathione S-transferase 4 (223 aa).

A2 carries the post-translational modification Blocked amino end (Ala). Positions P4–L85 constitute a GST N-terminal domain. Glutathione-binding positions include S14, H43 to R44, K56 to V57, and E69 to S70. One can recognise a GST C-terminal domain in the interval R90–E223.

It belongs to the GST superfamily. Phi family. In terms of assembly, homodimer or heterodimer of GST-I and GST-IV (=GST-II). As to expression, seedling roots.

It carries out the reaction RX + glutathione = an S-substituted glutathione + a halide anion + H(+). Its function is as follows. Conjugation of reduced glutathione to a wide number of exogenous and endogenous hydrophobic electrophiles. Involved in the detoxification of certain herbicides. Most active with substrates possessing a chloroacetamide structure. Trans-cinnamic acid and 1-chloro-2,4-dinitrobenzene are not effective substrates. May play an important role in the benoxacor-mediated protection of maize from metolachlor injury. The polypeptide is Glutathione S-transferase 4 (GST4) (Zea mays (Maize)).